The chain runs to 156 residues: Small ribosomal subunit protein uS7 (156 aa).

This sequence belongs to the universal ribosomal protein uS7 family. In terms of assembly, part of the 30S ribosomal subunit. Contacts proteins S9 and S11.

Functionally, one of the primary rRNA binding proteins, it binds directly to 16S rRNA where it nucleates assembly of the head domain of the 30S subunit. Is located at the subunit interface close to the decoding center, probably blocks exit of the E-site tRNA. The sequence is that of Small ribosomal subunit protein uS7 from Prochlorococcus marinus subsp. pastoris (strain CCMP1986 / NIES-2087 / MED4).